A 547-amino-acid polypeptide reads, in one-letter code: ATP synthase subunit beta, mitochondrial (547 aa).

A mitochondrion-targeting transit peptide spans methionine 1–tyrosine 45. A compositionally biased stretch (low complexity) spans lysine 52–threonine 62. The disordered stretch occupies residues lysine 52–lysine 74. Glycine 226–threonine 233 contributes to the ATP binding site.

It belongs to the ATPase alpha/beta chains family. As to quaternary structure, F-type ATPases have 2 components, CF(1) - the catalytic core - and CF(0) - the membrane proton channel. CF(1) has five subunits: alpha(3), beta(3), gamma(1), delta(1), epsilon(1). CF(0) has three main subunits: a, b and c.

It localises to the mitochondrion. The protein resides in the mitochondrion inner membrane. It catalyses the reaction ATP + H2O + 4 H(+)(in) = ADP + phosphate + 5 H(+)(out). Mitochondrial membrane ATP synthase (F(1)F(0) ATP synthase or Complex V) produces ATP from ADP in the presence of a proton gradient across the membrane which is generated by electron transport complexes of the respiratory chain. F-type ATPases consist of two structural domains, F(1) - containing the extramembraneous catalytic core, and F(0) - containing the membrane proton channel, linked together by a central stalk and a peripheral stalk. During catalysis, ATP synthesis in the catalytic domain of F(1) is coupled via a rotary mechanism of the central stalk subunits to proton translocation. Subunits alpha and beta form the catalytic core in F(1). Rotation of the central stalk against the surrounding alpha(3)beta(3) subunits leads to hydrolysis of ATP in three separate catalytic sites on the beta subunits. This Daucus carota (Wild carrot) protein is ATP synthase subunit beta, mitochondrial (ATPB).